Consider the following 347-residue polypeptide: NADH-ubiquinone oxidoreductase chain 2 (347 aa).

A run of 11 helical transmembrane segments spans residues 3 to 23, 25 to 45, 59 to 79, 96 to 116, 122 to 142, 149 to 169, 178 to 198, 200 to 220, 237 to 257, 274 to 294, and 325 to 345; these read PVVL…VMTT, HWLL…PILM, YFLT…INLI, IIMT…FWVP, IQLS…MSIL, INLH…GWGG, IMAY…IYNP, MALL…MTFM, MPLL…LPPL, NSII…FFYM, and LLSP…MLAL.

This sequence belongs to the complex I subunit 2 family. As to quaternary structure, core subunit of respiratory chain NADH dehydrogenase (Complex I) which is composed of 45 different subunits. Interacts with TMEM242.

Its subcellular location is the mitochondrion inner membrane. It carries out the reaction a ubiquinone + NADH + 5 H(+)(in) = a ubiquinol + NAD(+) + 4 H(+)(out). Core subunit of the mitochondrial membrane respiratory chain NADH dehydrogenase (Complex I) which catalyzes electron transfer from NADH through the respiratory chain, using ubiquinone as an electron acceptor. Essential for the catalytic activity and assembly of complex I. This Paranyctimene raptor (Unstriped tube-nosed fruit bat) protein is NADH-ubiquinone oxidoreductase chain 2.